Consider the following 360-residue polypeptide: Chorismate synthase (360 aa).

The disordered stretch occupies residues 36–60 (LSEDDIQPDLDRRKPGTSKYTTPRR). Arginine 48 lines the NADP(+) pocket. FMN is bound by residues 125-127 (RSS), 246-247 (NA), glycine 286, 301-305 (KPTSS), and arginine 327.

Belongs to the chorismate synthase family. In terms of assembly, homotetramer. FMNH2 is required as a cofactor.

The enzyme catalyses 5-O-(1-carboxyvinyl)-3-phosphoshikimate = chorismate + phosphate. The protein operates within metabolic intermediate biosynthesis; chorismate biosynthesis; chorismate from D-erythrose 4-phosphate and phosphoenolpyruvate: step 7/7. Functionally, catalyzes the anti-1,4-elimination of the C-3 phosphate and the C-6 proR hydrogen from 5-enolpyruvylshikimate-3-phosphate (EPSP) to yield chorismate, which is the branch point compound that serves as the starting substrate for the three terminal pathways of aromatic amino acid biosynthesis. This reaction introduces a second double bond into the aromatic ring system. The chain is Chorismate synthase from Histophilus somni (strain 129Pt) (Haemophilus somnus).